The chain runs to 212 residues: Cytidylate kinase (212 aa).

Glycine 7–threonine 15 contributes to the ATP binding site.

The protein belongs to the cytidylate kinase family. Type 1 subfamily.

The protein localises to the cytoplasm. The catalysed reaction is CMP + ATP = CDP + ADP. It carries out the reaction dCMP + ATP = dCDP + ADP. The protein is Cytidylate kinase of Bradyrhizobium diazoefficiens (strain JCM 10833 / BCRC 13528 / IAM 13628 / NBRC 14792 / USDA 110).